Consider the following 474-residue polypeptide: Ribosomal RNA small subunit methyltransferase F (474 aa).

S-adenosyl-L-methionine contacts are provided by residues 119–125 (AAAPGSK), Glu143, Asp170, and Asp188. Cys241 serves as the catalytic Nucleophile.

It belongs to the class I-like SAM-binding methyltransferase superfamily. RsmB/NOP family.

It is found in the cytoplasm. The catalysed reaction is cytidine(1407) in 16S rRNA + S-adenosyl-L-methionine = 5-methylcytidine(1407) in 16S rRNA + S-adenosyl-L-homocysteine + H(+). Functionally, specifically methylates the cytosine at position 1407 (m5C1407) of 16S rRNA. The chain is Ribosomal RNA small subunit methyltransferase F from Shewanella oneidensis (strain ATCC 700550 / JCM 31522 / CIP 106686 / LMG 19005 / NCIMB 14063 / MR-1).